We begin with the raw amino-acid sequence, 216 residues long: Golgi to ER traffic protein 1 (216 aa).

Topologically, residues 1-9 (MFDISSSNL) are lumenal. The helical transmembrane segment at 10–29 (LISVLVVLFAKQLINAVGKA) threads the bilayer. At 30 to 116 (TLENIGWSAY…YISKYIGYMI (87 aa)) the chain is on the cytoplasmic side. Positions 54-105 (LDQKNVELAKVSKERKSISAQDQYARWTKLNRQFDKLTGEINKLKEETSASR) form a coiled coil. A helical membrane pass occupies residues 117-137 (LVTTTLPIWFFRVWFRKAVLF). Residues 138-161 (YFPTGVLPHYLEWFLALPFITTGG) are Lumenal-facing. Residues 162-178 (VGLTIWMSAVNNVVSSV) traverse the membrane as a helical segment. Residues 179–216 (IFLVKFPFEKEVPFPSKEVGNEKTSINKEEVSGTPAAN) lie on the Cytoplasmic side of the membrane. A disordered region spans residues 193 to 216 (PSKEVGNEKTSINKEEVSGTPAAN). A compositionally biased stretch (basic and acidic residues) spans 197 to 209 (VGNEKTSINKEEV).

It belongs to the WRB/GET1 family. In terms of assembly, component of the Golgi to ER traffic (GET) complex, which is composed of GET1, GET2 and GET3. Within the complex, GET1 and GET2 form a heterotetramer which is stabilized by phosphatidylinositol binding and which binds to the GET3 homodimer.

It localises to the endoplasmic reticulum membrane. Its subcellular location is the golgi apparatus membrane. Required for the post-translational delivery of tail-anchored (TA) proteins to the endoplasmic reticulum. Together with GET2, acts as a membrane receptor for soluble GET3, which recognizes and selectively binds the transmembrane domain of TA proteins in the cytosol. The GET complex cooperates with the HDEL receptor ERD2 to mediate the ATP-dependent retrieval of resident ER proteins that contain a C-terminal H-D-E-L retention signal from the Golgi to the ER. This chain is Golgi to ER traffic protein 1, found in Debaryomyces hansenii (strain ATCC 36239 / CBS 767 / BCRC 21394 / JCM 1990 / NBRC 0083 / IGC 2968) (Yeast).